The primary structure comprises 197 residues: Recombination protein RecR (197 aa).

Residues 57–72 form a C4-type zinc finger; sequence CSVCFGITEDDPCHLC. The 96-residue stretch at 79 to 174 folds into the Toprim domain; that stretch reads TTICVVEEPQ…RVTRLAHGIP (96 aa).

Belongs to the RecR family.

In terms of biological role, may play a role in DNA repair. It seems to be involved in an RecBC-independent recombinational process of DNA repair. It may act with RecF and RecO. The sequence is that of Recombination protein RecR from Geotalea daltonii (strain DSM 22248 / JCM 15807 / FRC-32) (Geobacter daltonii).